A 332-amino-acid chain; its full sequence is Ribosomal RNA small subunit methyltransferase C (332 aa).

It belongs to the methyltransferase superfamily. RsmC family. Monomer.

Its subcellular location is the cytoplasm. The enzyme catalyses guanosine(1207) in 16S rRNA + S-adenosyl-L-methionine = N(2)-methylguanosine(1207) in 16S rRNA + S-adenosyl-L-homocysteine + H(+). Its function is as follows. Specifically methylates the guanine in position 1207 of 16S rRNA in the 30S particle. The chain is Ribosomal RNA small subunit methyltransferase C from Pseudomonas entomophila (strain L48).